A 512-amino-acid polypeptide reads, in one-letter code: SWI/SNF complex subunit SWI3A (512 aa).

One can recognise an SWIRM domain in the interval 13–110 (YTIPAQSSWF…FSSSLKKNDH (98 aa)). The SANT domain maps to 223-274 (SAAAVWTEEEILLLLESVLKHGDDWELISQSVSTKSRLDCISKLIELPFGEF). Residues 291–325 (DENTEQVQTDGQEHEETETREEKEDRVNEDEPPAK) are disordered. A coiled-coil region spans residues 424–488 (ALGAAAAQAK…IEGVKETIIQ (65 aa)).

As to quaternary structure, homodimers and heterodimers. Interacts with SWI3B, SWI3C, BSH, and the C-terminus of FCA, but not with BRM or SWI3D. In terms of tissue distribution, expressed in roots, stems, leaves and flowers, but not in siliques.

It is found in the nucleus. Component of a multiprotein complex equivalent of the SWI/SNF complex, an ATP-dependent chromatin-remodeling complex, which is required for the positive and negative regulation of gene expression of a large number of genes. It changes chromatin structure by altering DNA-histone contacts within a nucleosome, leading eventually to a change in nucleosome position, thus facilitating or repressing binding of gene-specific transcription factors. The polypeptide is SWI/SNF complex subunit SWI3A (SWI3A) (Arabidopsis thaliana (Mouse-ear cress)).